We begin with the raw amino-acid sequence, 664 residues long: MFKLVSEFEPTGDQPQAIEKLVEGLNRGMRFQTLLGVTGSGKTFTMANVIARVNRPALVISPNKTLAAQLYQEFKAFFPENRVEFFISYYDYYQPEAYIPTKDLYIEKNADINDVIVRMRMSTLKSVRTRRDVVVVASVSCIYATGDPNDFDRMNINLAVGDRIDVLELAERLARIGYQRTEDVSLSGCFRLKGDTVEIYPTYQDEGIRIEFFGDEVDSITLIDRFNRTTLEHLDKIIIYPAVEFITTEEKLKRAVESIREELNERLSELKKQGKILEYERLKQRTLNDIELLETMGYCPGIENYSRHFDGRKPGEPPYTLLDYFDKDFIVFIDESHITVPQLRAMYNGDRSRKKNLVEYGFRLPSAYDNRPLTFEEFLKKTGQIIFVSATPGDFELSISEQVVEQIIRPTGLVDPEVEVRPTAGQVDDLVNEIVKVKERGERALVTVLTKKTAELLSEHLTELGIRSLYLHSELDAIERVEVLKKLRRGDVDVVVGVNLLREGLDLPEVSLVAIMDADVEGFLRSETTLIQIIGRTARNINGKVIMYADRITNAMKRAIEETNRRRRIQLEYNKKHGITPRSVIKPLEIEVFEQFMVKEEPERYGDTVKNIFEMKKTLSPEEYMAVLEEEMYRAASELRYEDAAALRDELFRIREEIKKKKGL.

Residues 23 to 180 (EGLNRGMRFQ…ERLARIGYQR (158 aa)) form the Helicase ATP-binding domain. ATP is bound at residue 36–43 (GVTGSGKT). The Beta-hairpin signature appears at 89-112 (YYDYYQPEAYIPTKDLYIEKNADI). The Helicase C-terminal domain occupies 429-588 (DLVNEIVKVK…ITPRSVIKPL (160 aa)). Residues 622–657 (EEYMAVLEEEMYRAASELRYEDAAALRDELFRIREE) form the UVR domain.

This sequence belongs to the UvrB family. In terms of assembly, forms a heterotetramer with UvrA during the search for lesions. Interacts with UvrC in an incision complex.

Its subcellular location is the cytoplasm. Functionally, the UvrABC repair system catalyzes the recognition and processing of DNA lesions. A damage recognition complex composed of 2 UvrA and 2 UvrB subunits scans DNA for abnormalities. Upon binding of the UvrA(2)B(2) complex to a putative damaged site, the DNA wraps around one UvrB monomer. DNA wrap is dependent on ATP binding by UvrB and probably causes local melting of the DNA helix, facilitating insertion of UvrB beta-hairpin between the DNA strands. Then UvrB probes one DNA strand for the presence of a lesion. If a lesion is found the UvrA subunits dissociate and the UvrB-DNA preincision complex is formed. This complex is subsequently bound by UvrC and the second UvrB is released. If no lesion is found, the DNA wraps around the other UvrB subunit that will check the other stand for damage. The sequence is that of UvrABC system protein B from Thermotoga petrophila (strain ATCC BAA-488 / DSM 13995 / JCM 10881 / RKU-1).